The following is a 217-amino-acid chain: 3,4-dihydroxy-2-butanone 4-phosphate synthase (217 aa).

D-ribulose 5-phosphate contacts are provided by residues 37–38, Asp42, 150–154, and Glu174; these read RE and RRGHT. Glu38 is a binding site for Mg(2+). Residue His153 participates in Mg(2+) binding.

The protein belongs to the DHBP synthase family. Homodimer. The cofactor is Mg(2+). Mn(2+) serves as cofactor.

The catalysed reaction is D-ribulose 5-phosphate = (2S)-2-hydroxy-3-oxobutyl phosphate + formate + H(+). It participates in cofactor biosynthesis; riboflavin biosynthesis; 2-hydroxy-3-oxobutyl phosphate from D-ribulose 5-phosphate: step 1/1. Catalyzes the conversion of D-ribulose 5-phosphate to formate and 3,4-dihydroxy-2-butanone 4-phosphate. This Shewanella putrefaciens (strain CN-32 / ATCC BAA-453) protein is 3,4-dihydroxy-2-butanone 4-phosphate synthase.